Consider the following 300-residue polypeptide: Probable L-serine dehydratase, alpha chain (300 aa).

The protein belongs to the iron-sulfur dependent L-serine dehydratase family. In terms of assembly, heterodimer of an alpha chain and a beta chain. Requires [4Fe-4S] cluster as cofactor.

It catalyses the reaction L-serine = pyruvate + NH4(+). Its pathway is carbohydrate biosynthesis; gluconeogenesis. This is Probable L-serine dehydratase, alpha chain (sdaAA) from Bacillus subtilis (strain 168).